Consider the following 4235-residue polypeptide: Tenellin synthetase (4235 aa).

The Ketosynthase family 3 (KS3) domain occupies 15 to 455 (SEPIAIVGSA…GTNAHAIIER (441 aa)). Residues Cys-189, His-326, and His-375 each act as for beta-ketoacyl synthase activity in the active site. The segment at 590–924 (IFTGQGAQWP…ANDAVAFSTA (335 aa)) is malonyl-CoA:ACP transacylase (MAT) domain. Residues 993 to 1135 (HELLGRRMPD…GRIAVHLGAK (143 aa)) are N-terminal hotdog fold. The dehydratase (DH) domain stretch occupies residues 993–1310 (HELLGRRMPD…GFEVRAVGEP (318 aa)). A PKS/mFAS DH domain is found at 993–1313 (HELLGRRMPD…VRAVGEPDAS (321 aa)). Catalysis depends on His-1025, which acts as the Proton acceptor; for dehydratase activity. Positions 1158-1313 (LQQLDCEKLY…VRAVGEPDAS (156 aa)) are C-terminal hotdog fold. Asp-1217 serves as the catalytic Proton donor; for dehydratase activity. The tract at residues 1459 to 1652 (RLYTEDKGMH…FSGVDHIVHD (194 aa)) is methyltransferase (MT) domain. The ketoreductase (KR) domain stretch occupies residues 2208–2381 (TYLMVGAAGG…AASIIHVGHV (174 aa)). One can recognise a Carrier 1 domain in the interval 2500-2580 (EAAAAALKGF…QLSALAAKLA (81 aa)). An O-(pantetheine 4'-phosphoryl)serine modification is found at Ser-2540. Residues 2587–2709 (RAQLEEASGN…EISSNGFFTQ (123 aa)) are disordered. Over residues 2605–2619 (NDKETGPSKKGKAQE) the composition is skewed to basic and acidic residues. Composition is skewed to polar residues over residues 2645-2659 (GGSSTANFTTSSSVS) and 2666-2678 (QESTLQSSENNGE). A compositionally biased stretch (low complexity) spans 2679–2695 (STPSKSSNCNSDSGSDN). A condensation (C) domain region spans residues 2720–3163 (REAPMSPAQS…TAQSVGDCVV (444 aa)). Residues 3197–3609 (CQQHSTKSAI…DGTLLCFGRI (413 aa)) are adenylation (A) (KR) domain. Positions 3724 to 3750 (DEAAAATSPSNDNNNNNTPSGGGGEKM) are disordered. The span at 3726–3742 (AAAATSPSNDNNNNNTP) shows a compositional bias: low complexity. Residues 3748-3833 (EKMTVRQGEL…GMARCVAEQR (86 aa)) enclose the Carrier 2 domain. Ser-3793 is subject to O-(pantetheine 4'-phosphoryl)serine. The tract at residues 3860-3889 (EKLQHSSASSSSSSSSSSAGSSSTQRPRKT) is disordered. The segment covering 3865–3882 (SSASSSSSSSSSSAGSSS) has biased composition (low complexity). Positions 3896–4141 (LTGATGFLGG…LDFGQVDKVV (246 aa)) are reductase (RED) domain.

This sequence in the C-terminal section; belongs to the NRP synthetase family.

Its pathway is secondary metabolite biosynthesis. Its function is as follows. Hybrid PKS-NRPS synthetase; part of the gene cluster that mediates the biosynthesis of tenellin-type 2-pyridones, iron-chelating compounds involved in iron stress tolerance, competition with the natural competitor fungus Metarhizium robertsii and insect hosts infection. TenS catalyzes the assembly of the polyketide-amino acid backbone. Because tenS lacks a designated enoylreductase (ER) domain, the required activity is provided the enoyl reductase tenC. Upon formation of the polyketide backbone on the thiotemplate, the triketide is transferred to the NRPS module and linked to tyrosine to produce the pyrrolidine-2-dione intermediates, including pretellinin A, 11-hydropretellenin A, 12-hydropretellenin A, 13-hydropretellenin A, 14-hydropretellenin A, 12-oxopretellenin A and prototellinin D. The pathway begins with the assembly of the polyketide-amino acid backbone by the hybrid PKS-NRPS tenS with the help of the enoyl reductase tenC. These enzymes catalyze the synthesis of the pyrrolidine-2-dione intermediates pretellinin A, 11-hydropretellenin A, 12-hydropretellenin A, 13-hydropretellenin A, 14-hydropretellenin A, 12-oxopretellenin A and prototellinin D. The cytochrome P450 monooxygenase tenA then catalyzes an oxidative ring expansion of pretenellin A and 14-hydropretellenin A to form the 2-pyridone core, leading to pretenellin B and pyridovericin, respectively. The cytochrome P450 monooxygenase tenB is then required for the selective N-hydroxylation of the 2-pyridone nitrogen of yield tellinin and 15-hydroxytellenin (15-HT), respectively. The UDP-glucosyltransferase GT1 and the methyltransferase MT1, located outside the tenS gene cluster, contribute to the stepwise glycosylation and methylation of 15-HT to obtain the glycoside pyridovericin-N-O-(4-O-methyl-beta-D-glucopyranoside) (PMGP). Additional related compounds such as 1-O-methyl-15-HT, (8Z)-1-O-methyl-15-HT, and O-methyltenellin A are also produced but the enzymes involved in their biosynthesis have still to be determined. In Beauveria bassiana (strain ARSEF 2860) (White muscardine disease fungus), this protein is Tenellin synthetase.